A 793-amino-acid chain; its full sequence is Kinesin-associated protein 3 (793 aa).

Phosphoserine is present on serine 60. Residues 103–119 (LPGKEKKEKSSKPKDPP) show a composition bias toward basic and acidic residues. The tract at residues 103–123 (LPGKEKKEKSSKPKDPPPFEG) is disordered. ARM repeat units follow at residues 333–373 (FMEN…NLSF), 374–412 (DTGL…HISM), 494–533 (DGPT…NLTI), 578–620 (DDSC…QMVF), and 621–662 (HQAT…IIAE).

Interacts with SMC3 subunit of the cohesin complex. Heterotrimer of KIFAP3, KIF3A and KIF3B. Interacts with RAP1GDS1/SMG GDS. Phosphorylated on tyrosine residues by SRC in vitro; this reduces the binding affinity of the protein for RAP1GDS1.

In terms of biological role, involved in tethering the chromosomes to the spindle pole and in chromosome movement. Binds to the tail domain of the KIF3A/KIF3B heterodimer to form a heterotrimeric KIF3 complex and may regulate the membrane binding of this complex. In Mus musculus (Mouse), this protein is Kinesin-associated protein 3 (Kifap3).